The chain runs to 219 residues: Ras-related protein Rab-3B (219 aa).

Alanine 2 is subject to N-acetylalanine. The GTP site is built by serine 31, serine 32, valine 33, glycine 34, lysine 35, threonine 36, serine 37, proline 49, and serine 53. Threonine 36 is a binding site for Mg(2+). The Switch 1 signature appears at 45-58; it reads DTFTPAFVSTVGID. Residues threonine 54 and aspartate 77 each coordinate Mg(2+). The short motif at 78 to 96 is the Switch 2 element; it reads TAGQERYRTITTAYYRGAM. Position 80 (glycine 80) interacts with GTP. A Phosphothreonine modification is found at threonine 86. Residues asparagine 135, lysine 136, aspartate 138, alanine 166, and lysine 167 each contribute to the GTP site. A phosphoserine mark is found at serine 188 and serine 190. Residues cysteine 217 and cysteine 219 are each lipidated (S-geranylgeranyl cysteine). Cysteine 219 is subject to Cysteine methyl ester.

Belongs to the small GTPase superfamily. Rab family. Interacts with RIMS1, RIMS2, RPH3A and RPH3AL. The GTP-bound form interacts with GAS8/DRC4 (via coiled-coil domains). Interacts with GDI2, CHM and CHML; phosphorylation at Thr-86 disrupts these interactions. Interacts with MADD (via uDENN domain); the GTP-bound form is preferred for interaction. Requires Mg(2+) as cofactor. Post-translationally, phosphorylation of Thr-86 in the switch II region by LRRK2 prevents the association of RAB regulatory proteins, including CHM, CHML and RAB GDP dissociation inhibitor GDI2.

The protein resides in the cell membrane. The protein localises to the golgi apparatus. It carries out the reaction GTP + H2O = GDP + phosphate + H(+). With respect to regulation, regulated by guanine nucleotide exchange factors (GEFs) which promote the exchange of bound GDP for free GTP. Regulated by GTPase activating proteins (GAPs) which increase the GTP hydrolysis activity. Inhibited by GDP dissociation inhibitors (GDIs) which prevent Rab-GDP dissociation. In terms of biological role, the small GTPases Rab are key regulators of intracellular membrane trafficking, from the formation of transport vesicles to their fusion with membranes. Rabs cycle between an inactive GDP-bound form and an active GTP-bound form that is able to recruit to membranes different sets of downstream effectors directly responsible for vesicle formation, movement, tethering and fusion. In Mesocricetus auratus (Golden hamster), this protein is Ras-related protein Rab-3B (RAB3B).